The primary structure comprises 122 residues: Large ribosomal subunit protein uL14 (122 aa).

This sequence belongs to the universal ribosomal protein uL14 family. As to quaternary structure, part of the 50S ribosomal subunit. Forms a cluster with proteins L3 and L19. In the 70S ribosome, L14 and L19 interact and together make contacts with the 16S rRNA in bridges B5 and B8.

In terms of biological role, binds to 23S rRNA. Forms part of two intersubunit bridges in the 70S ribosome. The protein is Large ribosomal subunit protein uL14 of Synechococcus sp. (strain JA-3-3Ab) (Cyanobacteria bacterium Yellowstone A-Prime).